Reading from the N-terminus, the 91-residue chain is Anther-specific protein RTS (91 aa).

An N-terminal signal peptide occupies residues 1 to 21 (MVRVGAAAAVLVLAAAAAAMA).

Its function is as follows. Required for tapetum and pollen development. The chain is Anther-specific protein RTS from Oryza sativa subsp. japonica (Rice).